We begin with the raw amino-acid sequence, 542 residues long: CTP synthase (542 aa).

Positions 1 to 265 (MARYVFITGG…DSEVLSAFGI (265 aa)) are amidoligase domain. A CTP-binding site is contributed by Ser13. UTP is bound at residue Ser13. 14–19 (SLGKGI) contacts ATP. Tyr54 serves as a coordination point for L-glutamine. ATP is bound at residue Asp71. Asp71 and Glu139 together coordinate Mg(2+). CTP-binding positions include 146–148 (DIE), 186–191 (KTKPTQ), and Lys222. UTP contacts are provided by residues 186–191 (KTKPTQ) and Lys222. In terms of domain architecture, Glutamine amidotransferase type-1 spans 291 to 541 (TIAVVGKYTG…IEAAIEQSRL (251 aa)). L-glutamine is bound at residue Gly353. The Nucleophile; for glutamine hydrolysis role is filled by Cys380. L-glutamine is bound by residues 381-384 (FGMQ), Glu404, and Arg469. Catalysis depends on residues His514 and Glu516.

It belongs to the CTP synthase family. Homotetramer.

The enzyme catalyses UTP + L-glutamine + ATP + H2O = CTP + L-glutamate + ADP + phosphate + 2 H(+). The catalysed reaction is L-glutamine + H2O = L-glutamate + NH4(+). It carries out the reaction UTP + NH4(+) + ATP = CTP + ADP + phosphate + 2 H(+). It participates in pyrimidine metabolism; CTP biosynthesis via de novo pathway; CTP from UDP: step 2/2. Its activity is regulated as follows. Allosterically activated by GTP, when glutamine is the substrate; GTP has no effect on the reaction when ammonia is the substrate. The allosteric effector GTP functions by stabilizing the protein conformation that binds the tetrahedral intermediate(s) formed during glutamine hydrolysis. Inhibited by the product CTP, via allosteric rather than competitive inhibition. Functionally, catalyzes the ATP-dependent amination of UTP to CTP with either L-glutamine or ammonia as the source of nitrogen. Regulates intracellular CTP levels through interactions with the four ribonucleotide triphosphates. In Brucella canis (strain ATCC 23365 / NCTC 10854 / RM-666), this protein is CTP synthase.